Consider the following 335-residue polypeptide: Probable E3 ubiquitin-protein ligase BAH1-like (335 aa).

The region spanning 1–163 is the SPX domain; that stretch reads MKFGETFTEY…SSENGKNFKL (163 aa). The segment at 231-280 adopts an RING-type zinc-finger fold; sequence CAICLETVFNPYALKCGHIFCNSCACSAASVLIFQGIKAAPRHSKCPICR.

This sequence belongs to the RING-type zinc finger family.

The enzyme catalyses S-ubiquitinyl-[E2 ubiquitin-conjugating enzyme]-L-cysteine + [acceptor protein]-L-lysine = [E2 ubiquitin-conjugating enzyme]-L-cysteine + N(6)-ubiquitinyl-[acceptor protein]-L-lysine.. The protein operates within protein modification; protein ubiquitination. This Arabidopsis thaliana (Mouse-ear cress) protein is Probable E3 ubiquitin-protein ligase BAH1-like (RF178).